A 376-amino-acid chain; its full sequence is CCA-adding enzyme (376 aa).

Residues Gly23 and Arg26 each coordinate ATP. The CTP site is built by Gly23 and Arg26. Mg(2+) contacts are provided by Glu36 and Asp38. Positions 106, 152, and 155 each coordinate ATP. The CTP site is built by Arg106, Arg152, and Arg155.

This sequence belongs to the tRNA nucleotidyltransferase/poly(A) polymerase family. Bacterial CCA-adding enzyme type 2 subfamily. It depends on Mg(2+) as a cofactor.

It carries out the reaction a tRNA precursor + 2 CTP + ATP = a tRNA with a 3' CCA end + 3 diphosphate. The enzyme catalyses a tRNA with a 3' CCA end + 2 CTP + ATP = a tRNA with a 3' CCACCA end + 3 diphosphate. In terms of biological role, catalyzes the addition and repair of the essential 3'-terminal CCA sequence in tRNAs without using a nucleic acid template. Adds these three nucleotides in the order of C, C, and A to the tRNA nucleotide-73, using CTP and ATP as substrates and producing inorganic pyrophosphate. tRNA 3'-terminal CCA addition is required both for tRNA processing and repair. Also involved in tRNA surveillance by mediating tandem CCA addition to generate a CCACCA at the 3' terminus of unstable tRNAs. While stable tRNAs receive only 3'-terminal CCA, unstable tRNAs are marked with CCACCA and rapidly degraded. In Coxiella burnetii (strain RSA 331 / Henzerling II), this protein is CCA-adding enzyme.